The sequence spans 255 residues: Ribonuclease HII (255 aa).

The 183-residue stretch at Leu-73–Leu-255 folds into the RNase H type-2 domain. A divalent metal cation-binding residues include Asp-79, Glu-80, and Asp-171.

This sequence belongs to the RNase HII family. The cofactor is Mn(2+). Mg(2+) serves as cofactor.

The protein localises to the cytoplasm. It catalyses the reaction Endonucleolytic cleavage to 5'-phosphomonoester.. Functionally, endonuclease that specifically degrades the RNA of RNA-DNA hybrids. The protein is Ribonuclease HII of Clostridioides difficile (strain 630) (Peptoclostridium difficile).